Consider the following 376-residue polypeptide: MNDVLDLTCDLIARASVTPEDAGCQALLAGRLTAAGFACEHLRLGEVDNLWATHGSGAPVLVLLGHTDVVPPGPREAWTSDPFDPQIRDGVLYGRGVADMKGSVAAFVVAAEQFVAAHRAHAGTLAVLLTSDEEGDAIDGVRRVANLFLERGQAIDWCITGEPSSTERLGDLLRVGRRGSLSGTLTVKGVQGHVAYPHKARNPIHLAAPALAELVARQWDDGFESFPPTSLQVSNIHAGTGANNVIPGELQVAFNLRYTPHWDAPRLEAEITALLDRHALDYALRWHRSGEPFYTPEGRLRSVAREVLGAFAGAPPEESTGGGTSDARFIAPLGAQCIEVGPVNASIHQVDEHVRVADLQALPALYRTLIERLLIE.

His66 provides a ligand contact to Zn(2+). Asp68 is an active-site residue. Asp99 provides a ligand contact to Zn(2+). The active-site Proton acceptor is the Glu133. Residues Glu134, Glu162, and His348 each coordinate Zn(2+).

The protein belongs to the peptidase M20A family. DapE subfamily. Homodimer. The cofactor is Zn(2+). Co(2+) is required as a cofactor.

It carries out the reaction N-succinyl-(2S,6S)-2,6-diaminopimelate + H2O = (2S,6S)-2,6-diaminopimelate + succinate. Its pathway is amino-acid biosynthesis; L-lysine biosynthesis via DAP pathway; LL-2,6-diaminopimelate from (S)-tetrahydrodipicolinate (succinylase route): step 3/3. Functionally, catalyzes the hydrolysis of N-succinyl-L,L-diaminopimelic acid (SDAP), forming succinate and LL-2,6-diaminopimelate (DAP), an intermediate involved in the bacterial biosynthesis of lysine and meso-diaminopimelic acid, an essential component of bacterial cell walls. This chain is Succinyl-diaminopimelate desuccinylase, found in Xanthomonas oryzae pv. oryzae (strain MAFF 311018).